Consider the following 443-residue polypeptide: Putative cytochrome bd menaquinol oxidase subunit I (443 aa).

A run of 9 helical transmembrane segments spans residues 19 to 39 (IIFATLGVGLPLMILVAELIY), 60 to 80 (VLLGVAIPTGTIAGTQLALLW), 93 to 113 (LPFQIEIYAFFVEALFMSIYV), 125 to 145 (IVAVFFVLVGAAASAVLITNV), 176 to 196 (FFITAGHVVLSAFMTGAFIVA), 219 to 239 (ALLLALTIGGIFSLLTALNGH), 322 to 342 (LFNAMVGVGMLLILYSIIGVV), 357 to 377 (LIIFMTAGPFSLIGIEFGWIF), and 405 to 425 (VLFLFFTFVYAVLGAAVVYVL). His182 lines the heme b pocket.

This sequence belongs to the cytochrome ubiquinol oxidase subunit 1 family. Requires heme b as cofactor.

It is found in the cell membrane. In terms of biological role, may have a role in sporulation. Can compensate for the loss of cytochrome aa3. The chain is Putative cytochrome bd menaquinol oxidase subunit I (ythA) from Bacillus subtilis (strain 168).